Consider the following 387-residue polypeptide: 3-ketoacyl-CoA thiolase (387 aa).

Cysteine 91 serves as the catalytic Acyl-thioester intermediate. Active-site proton acceptor residues include histidine 343 and cysteine 373.

The protein belongs to the thiolase-like superfamily. Thiolase family. As to quaternary structure, heterotetramer of two alpha chains (FadB) and two beta chains (FadA).

The protein resides in the cytoplasm. The enzyme catalyses an acyl-CoA + acetyl-CoA = a 3-oxoacyl-CoA + CoA. The protein operates within lipid metabolism; fatty acid beta-oxidation. In terms of biological role, catalyzes the final step of fatty acid oxidation in which acetyl-CoA is released and the CoA ester of a fatty acid two carbons shorter is formed. In Shewanella baltica (strain OS155 / ATCC BAA-1091), this protein is 3-ketoacyl-CoA thiolase.